The sequence spans 171 residues: uncharacterized protein (171 aa).

This is an uncharacterized protein from Mycoplasma genitalium (strain ATCC 33530 / DSM 19775 / NCTC 10195 / G37) (Mycoplasmoides genitalium).